The following is a 173-amino-acid chain: NADH-ubiquinone oxidoreductase chain 6 (173 aa).

The next 5 helical transmembrane spans lie at 1-21 (MTYF…AVAS), 25-45 (PYFA…VLVG), 53-73 (LVLF…SAAL), 87-107 (VLGY…FFWG), and 141-161 (GGML…VLEL).

It belongs to the complex I subunit 6 family.

The protein resides in the mitochondrion membrane. It catalyses the reaction a ubiquinone + NADH + 5 H(+)(in) = a ubiquinol + NAD(+) + 4 H(+)(out). Functionally, core subunit of the mitochondrial membrane respiratory chain NADH dehydrogenase (Complex I) that is believed to belong to the minimal assembly required for catalysis. Complex I functions in the transfer of electrons from NADH to the respiratory chain. The immediate electron acceptor for the enzyme is believed to be ubiquinone. This is NADH-ubiquinone oxidoreductase chain 6 (MT-ND6) from Carassius auratus (Goldfish).